We begin with the raw amino-acid sequence, 296 residues long: Zinc finger CCCH-type antiviral protein 1-like (296 aa).

A2 is subject to N-acetylalanine. 2 consecutive C3H1-type zinc fingers follow at residues 111–136 (LCRRHMLGKCPHRDCWSTCSLSHDIH) and 198–219 (VCKSFVRGECPFQPCKRSHQLI).

This Mus musculus (Mouse) protein is Zinc finger CCCH-type antiviral protein 1-like (Zc3hav1l).